We begin with the raw amino-acid sequence, 256 residues long: Undecaprenyl-diphosphatase 2 (256 aa).

A run of 8 helical transmembrane segments spans residues 1–21 (MDIF…FLPI), 38–58 (ATAT…LAVL), 70–90 (LNLW…AFIF), 97–117 (LFNV…FLLL), 134–154 (VTYK…IPGT), 175–195 (AEFS…YDLL), 208–228 (ALAV…KLFI), and 236–256 (FVSF…IAYV).

This sequence belongs to the UppP family.

The protein resides in the cell inner membrane. The enzyme catalyses di-trans,octa-cis-undecaprenyl diphosphate + H2O = di-trans,octa-cis-undecaprenyl phosphate + phosphate + H(+). Functionally, catalyzes the dephosphorylation of undecaprenyl diphosphate (UPP). Confers resistance to bacitracin. The protein is Undecaprenyl-diphosphatase 2 of Pseudoalteromonas translucida (strain TAC 125).